We begin with the raw amino-acid sequence, 666 residues long: MTVLQKIQSLREELNLHNYNYYVLDNPTISDYDFDVKLTDLQSLEKNNPEYFDENSPTQRVGGTITKNFETLKHDYRMYSLDNSYSKEDLLDWENRIQKALGDVPLEYICELKYDGASISITYENGRLVRAVTRGDGFQGDDVTNNIKTIKAVPIKLKGDFPEKFDIRGEIILPFAGFEKMNQDLIEIGETPYSNPRNTASGSLKLQDSAEVAKRPLDCLLYSLIGNNLPFQSHFEGLEKARLWGFKVPKQSHLAKNMNEVFDFINIWDKNRHTLPYETDGVVIKVNDLHLQDELGYTAKSPRWAIAYKFKSEQVFTQLNSISYQVGRTGSITPVANLEPVQLAGTIVKRASLHNADQIEKLDIRINDTVFVEKGGEIIPKIIGVDLQKRPSNSQKTAYITHCPECQTKLERKEGEANHYCPNFYGCRPQIIGRIQHYISRKAMDIEGLGGETVALLYDNGLVKNYADLYDLSVEQILPLERMAQKSAENLVQGVQNSKNIPFENVLFALGIRYVGETVAKKLAKHYKNIDAIANANLLELVMVDEIGDKIAQSVVEFFDNQENISVLERLKNNGIQLAISEENNTVVSNKLLGKIFVVSGVFEIYSRDELKKAIEDNGGKVGSSISAKTNYVIAGQNMGPAKLEKANQLKVSIISESDFSALLTS.

NAD(+)-binding positions include 31–35 (DYDFD), 80–81 (SL), and glutamate 111. The N6-AMP-lysine intermediate role is filled by lysine 113. NAD(+) contacts are provided by arginine 134, glutamate 170, lysine 285, and lysine 309. Residues cysteine 403, cysteine 406, cysteine 421, and cysteine 427 each coordinate Zn(2+). Residues 587–666 (VVSNKLLGKI…ESDFSALLTS (80 aa)) form the BRCT domain.

Belongs to the NAD-dependent DNA ligase family. LigA subfamily. Mg(2+) serves as cofactor. It depends on Mn(2+) as a cofactor.

It carries out the reaction NAD(+) + (deoxyribonucleotide)n-3'-hydroxyl + 5'-phospho-(deoxyribonucleotide)m = (deoxyribonucleotide)n+m + AMP + beta-nicotinamide D-nucleotide.. In terms of biological role, DNA ligase that catalyzes the formation of phosphodiester linkages between 5'-phosphoryl and 3'-hydroxyl groups in double-stranded DNA using NAD as a coenzyme and as the energy source for the reaction. It is essential for DNA replication and repair of damaged DNA. The sequence is that of DNA ligase from Flavobacterium psychrophilum (strain ATCC 49511 / DSM 21280 / CIP 103535 / JIP02/86).